A 305-amino-acid polypeptide reads, in one-letter code: tRNA dimethylallyltransferase (305 aa).

11–18 (GPTAVGKT) provides a ligand contact to ATP. Residue 13-18 (TAVGKT) coordinates substrate. An interaction with substrate tRNA region spans residues 36–39 (DSMQ).

The protein belongs to the IPP transferase family. As to quaternary structure, monomer. Mg(2+) is required as a cofactor.

The catalysed reaction is adenosine(37) in tRNA + dimethylallyl diphosphate = N(6)-dimethylallyladenosine(37) in tRNA + diphosphate. Its function is as follows. Catalyzes the transfer of a dimethylallyl group onto the adenine at position 37 in tRNAs that read codons beginning with uridine, leading to the formation of N6-(dimethylallyl)adenosine (i(6)A). The sequence is that of tRNA dimethylallyltransferase from Listeria monocytogenes serovar 1/2a (strain ATCC BAA-679 / EGD-e).